Reading from the N-terminus, the 391-residue chain is MSKRRVVVGMSGGVDSSVTAWLLKEQGYDVVGLFMKNWEDDDDGEYCSTRQDWIDVVSVADLIGIDVEAVNFAAEYKDRVFAEFLREYSAGRTPNPDVLCNAEIKFKAFLDHAMSLDAEMIATGHYARVRERDGRFELLKAFDHTKDQSYFLHRLNQAQLSKTMFPLGEIPKTKVREIAAQIGLPNAKKKDSTGICFIGERPFRDFLNRYLPTKPGPMKTPDGKVVGEHIGLAFYTFGQRKGIGLGGSKSGSGEPWFVAAKDIASNTLYVVQGHDHPWLLSRELVAGNVSWVAGEPPADGFACGAKTRYRQADAACVFGGAATGAAAAGPAGEVRFSLAFDDAQWAVTPGQSAVLYDGEICLGGGIIESAATGQPGQATSAGHAPALAEAR.

Residues 9–16 (GMSGGVDS) and Met35 each bind ATP. Residues 95-97 (NPD) form an interaction with target base in tRNA region. The active-site Nucleophile is Cys100. Cysteines 100 and 196 form a disulfide. Gly124 provides a ligand contact to ATP. The segment at 146–148 (KDQ) is interaction with tRNA. Residue Cys196 is the Cysteine persulfide intermediate of the active site. The interaction with tRNA stretch occupies residues 308–309 (RY).

The protein belongs to the MnmA/TRMU family.

It localises to the cytoplasm. The enzyme catalyses S-sulfanyl-L-cysteinyl-[protein] + uridine(34) in tRNA + AH2 + ATP = 2-thiouridine(34) in tRNA + L-cysteinyl-[protein] + A + AMP + diphosphate + H(+). Catalyzes the 2-thiolation of uridine at the wobble position (U34) of tRNA, leading to the formation of s(2)U34. The chain is tRNA-specific 2-thiouridylase MnmA from Burkholderia cenocepacia (strain HI2424).